Consider the following 318-residue polypeptide: MENNITVVGASNWDTFIYVDKMPRVGETIKGTDLKVSYGGKAANQAVQASLLGSNCTLITKLGDDPSGVNTLKNFKDKNINCEFVSVVSNVPSGCATIIVDKNGDNNIIIIGGSNDLLNEKDVDNAKSQIQNSSLLLCQLEVSLNVTLHALKIAKESNKCKTMLNLTPINNDPLILEMFKFVDILIVNEIELIGLYNSTFNNNNNNEKDFNINQLMEMCDNLIKKFENFENIIVTLGGNGQLLVSKENNKNCHIELKEKVKVVDTSGAGDSFIGSFAHYLVTENKPLKDSIESASKVASISVTRHGTQTSYPKSNEIN.

Substrate-binding positions include 12–14, 40–44, and Glu-141; these read NWD and GKAAN. Residues Asn-188 and 235–240 contribute to the ATP site; that span reads TLGGNG. Residues Asp-264 and Ser-266 each contribute to the K(+) site. ATP is bound at residue 269-270; it reads GD. Asp-270 contributes to the substrate binding site. Asp-270 functions as the Proton acceptor in the catalytic mechanism. Ser-301, Arg-304, Gly-306, and Ser-310 together coordinate K(+).

This sequence belongs to the carbohydrate kinase PfkB family. Ribokinase subfamily. As to quaternary structure, homodimer. The cofactor is Mg(2+).

Its subcellular location is the cytoplasm. It localises to the nucleus. It carries out the reaction D-ribose + ATP = D-ribose 5-phosphate + ADP + H(+). It participates in carbohydrate metabolism; D-ribose degradation; D-ribose 5-phosphate from beta-D-ribopyranose: step 2/2. Its activity is regulated as follows. Activated by a monovalent cation that binds near, but not in, the active site. The most likely occupant of the site in vivo is potassium. Ion binding induces a conformational change that may alter substrate affinity. Catalyzes the phosphorylation of ribose at O-5 in a reaction requiring ATP and magnesium. The resulting D-ribose-5-phosphate can then be used either for sythesis of nucleotides, histidine, and tryptophan, or as a component of the pentose phosphate pathway. In Dictyostelium discoideum (Social amoeba), this protein is Ribokinase (rbsk).